A 148-amino-acid chain; its full sequence is MKVILTSDVDKLGKAGEMVNAKTGFARNFLLPNKLAVQATKENIKIWEEKQAELRAIERENIKKANELKEKIENTKVKIIAKTGEGDRLFGSITSMDIEKALKEQHGLDVDKKKIEMKDNIKSLGTFNVVVKVYPDINANLEVIVDKE.

The protein belongs to the bacterial ribosomal protein bL9 family.

Functionally, binds to the 23S rRNA. This is Large ribosomal subunit protein bL9 from Finegoldia magna (strain ATCC 29328 / DSM 20472 / WAL 2508) (Peptostreptococcus magnus).